Consider the following 313-residue polypeptide: tRNA uridine(34) hydroxylase (313 aa).

One can recognise a Rhodanese domain in the interval 124-218 (SDPEVLLIDT…YLEEVPQEET (95 aa)). C178 (cysteine persulfide intermediate) is an active-site residue.

It belongs to the TrhO family.

The enzyme catalyses uridine(34) in tRNA + AH2 + O2 = 5-hydroxyuridine(34) in tRNA + A + H2O. Catalyzes oxygen-dependent 5-hydroxyuridine (ho5U) modification at position 34 in tRNAs. In Pseudomonas fluorescens (strain SBW25), this protein is tRNA uridine(34) hydroxylase.